Reading from the N-terminus, the 381-residue chain is Succinyl-diaminopimelate desuccinylase (381 aa).

His68 serves as a coordination point for Zn(2+). The active site involves Asp70. Asp101 is a Zn(2+) binding site. The Proton acceptor role is filled by Glu135. Positions 136, 164, and 350 each coordinate Zn(2+).

This sequence belongs to the peptidase M20A family. DapE subfamily. As to quaternary structure, homodimer. Requires Zn(2+) as cofactor. The cofactor is Co(2+).

It catalyses the reaction N-succinyl-(2S,6S)-2,6-diaminopimelate + H2O = (2S,6S)-2,6-diaminopimelate + succinate. The protein operates within amino-acid biosynthesis; L-lysine biosynthesis via DAP pathway; LL-2,6-diaminopimelate from (S)-tetrahydrodipicolinate (succinylase route): step 3/3. Its function is as follows. Catalyzes the hydrolysis of N-succinyl-L,L-diaminopimelic acid (SDAP), forming succinate and LL-2,6-diaminopimelate (DAP), an intermediate involved in the bacterial biosynthesis of lysine and meso-diaminopimelic acid, an essential component of bacterial cell walls. This Neisseria gonorrhoeae (strain ATCC 700825 / FA 1090) protein is Succinyl-diaminopimelate desuccinylase.